A 539-amino-acid polypeptide reads, in one-letter code: Serine/threonine-protein kinase BUR1 (539 aa).

The span at 1–15 shows a compositional bias: polar residues; it reads MEKLSETTPNGTSPR. The disordered stretch occupies residues 1–27; it reads MEKLSETTPNGTSPRTFALNHSRPRSS. Residues 37–339 form the Protein kinase domain; it reads YELLGKLGEG…AVDALQHPWF (303 aa). ATP is bound by residues 43-51 and Lys-66; that span reads LGEGTFGEV. The active-site Proton acceptor is Asp-169. The tract at residues 370–539 is disordered; that stretch reads AALPPAPKGG…DRPDHNGYRR (170 aa). Basic and acidic residues-rich tracts occupy residues 414–428, 471–514, and 521–539; these read NGPD…RERG, NRDD…DRGT, and PRHD…GYRR.

Belongs to the protein kinase superfamily. CMGC Ser/Thr protein kinase family. CDC2/CDKX subfamily.

The protein localises to the nucleus. It carries out the reaction L-seryl-[protein] + ATP = O-phospho-L-seryl-[protein] + ADP + H(+). The catalysed reaction is L-threonyl-[protein] + ATP = O-phospho-L-threonyl-[protein] + ADP + H(+). It catalyses the reaction [DNA-directed RNA polymerase] + ATP = phospho-[DNA-directed RNA polymerase] + ADP + H(+). Its function is as follows. Serine/threonine-protein kinase involved in transcription regulation. Phosphorylates the UBC2/RAD6 ubiquitin-conjugating enzyme (E2), leading to monoubiquitination of histone H2B and the silencing of telomeric-associated genes. Also required for histone H3 methylation. Necessary for the recovery from pheromone-induced growth arrest in the cell cycle G1 phase. The polypeptide is Serine/threonine-protein kinase BUR1 (BUR1) (Gibberella zeae (strain ATCC MYA-4620 / CBS 123657 / FGSC 9075 / NRRL 31084 / PH-1) (Wheat head blight fungus)).